A 118-amino-acid chain; its full sequence is Large ribosomal subunit protein bL20 (118 aa).

This sequence belongs to the bacterial ribosomal protein bL20 family.

In terms of biological role, binds directly to 23S ribosomal RNA and is necessary for the in vitro assembly process of the 50S ribosomal subunit. It is not involved in the protein synthesizing functions of that subunit. This is Large ribosomal subunit protein bL20 from Hahella chejuensis (strain KCTC 2396).